Consider the following 121-residue polypeptide: Large ribosomal subunit protein bL17 (121 aa).

The protein belongs to the bacterial ribosomal protein bL17 family. In terms of assembly, part of the 50S ribosomal subunit. Contacts protein L32.

The sequence is that of Large ribosomal subunit protein bL17 from Metamycoplasma arthritidis (strain 158L3-1) (Mycoplasma arthritidis).